The chain runs to 274 residues: Carbonic anhydrase (274 aa).

Zn(2+) is bound by residues cysteine 39, histidine 98, and cysteine 101. Residues 214–274 (EDEYAPHPNS…QAERIYRGSR (61 aa)) form a disordered region. 2 stretches are compositionally biased toward basic and acidic residues: residues 234–245 (PGKERPGREKAT) and 261–274 (LPRE…RGSR).

Belongs to the beta-class carbonic anhydrase family. In terms of assembly, a hexamer formed by a trimer of dimers. Interacts with the first 260 residues of CcmM; both the N-terminal 206 residues and the C-terminal tail contribute to CcmM binding. Interacts with full-length and the N-terminal 249 residues of CcmM. A probable CcmM-CcaA-CcmN complex as well as a CcaA-RuBisCO-CcmM complex can also be isolated. It depends on Zn(2+) as a cofactor.

The protein resides in the carboxysome. The enzyme catalyses hydrogencarbonate + H(+) = CO2 + H2O. With respect to regulation, inhibited by ethoxyzolamide. Functionally, reversible hydration of carbon dioxide. Essential to photosynthetic carbon dioxide fixation, supplies CO(2) to RuBisCO (ribulose bisphosphate carboxylase, rbcL-rbcS) in the carboxysome. The polypeptide is Carbonic anhydrase (Synechocystis sp. (strain ATCC 27184 / PCC 6803 / Kazusa)).